Reading from the N-terminus, the 87-residue chain is UPF0250 protein BCc_307 (87 aa).

Belongs to the UPF0250 family.

The chain is UPF0250 protein BCc_307 from Buchnera aphidicola subsp. Cinara cedri (strain Cc).